We begin with the raw amino-acid sequence, 127 residues long: MGDKPIWEQIGSSFIQHYYQLFDNDRTQLGAIYIDASCLTWEGQQFQGKAAIVEKLSSLPFQKIQHSITAQDHQPTPDSCIISMVVGQLKADEDPIMGFHQMFLLKNINDAWVCTNDMFRLALHNFG.

The residue at position 4 (Lys-4) is an N6-acetyllysine. The 112-residue stretch at 10 to 121 (IGSSFIQHYY…WVCTNDMFRL (112 aa)) folds into the NTF2 domain.

As to quaternary structure, homodimer. Interacts with RAN (GDP-bound form); the interaction is direct and regulates RAN nuclear import. Interacts with the nucleoporins NUP54, NUP58 and NUP62 (via FG repeats); recruits NUTF2 to the nuclear pore complex a step required for NUTF2-mediated GDP-bound RAN nuclear import. Interacts with CAPG; mediates its nuclear import.

It is found in the cytoplasm. The protein resides in the cytosol. It localises to the nucleus outer membrane. The protein localises to the nucleus. Its subcellular location is the nuclear pore complex. It is found in the nucleus inner membrane. The protein resides in the nucleoplasm. Functionally, mediates the import of GDP-bound RAN from the cytoplasm into the nucleus which is essential for the function of RAN in cargo receptor-mediated nucleocytoplasmic transport. Thereby, plays indirectly a more general role in cargo receptor-mediated nucleocytoplasmic transport. Interacts with GDP-bound RAN in the cytosol, recruits it to the nuclear pore complex via its interaction with nucleoporins and promotes its nuclear import. This Bos taurus (Bovine) protein is Nuclear transport factor 2.